The chain runs to 321 residues: Putative membrane-bound redox modulator Alx (321 aa).

Residues 1–6 (MNTVGT) are Periplasmic-facing. The chain crosses the membrane as a helical span at residues 7–27 (PLLWGGFAVVVAIMLAIDLLL). Residues 28–43 (QGRRGAHAMTMKQAAA) lie on the Cytoplasmic side of the membrane. The chain crosses the membrane as a helical span at residues 44 to 64 (WSLVWVTLSLLFNAAFWWYLV). The Periplasmic portion of the chain corresponds to 65–89 (QTEGRAVADPQALAFLTGYLIEKSL). The chain crosses the membrane as a helical span at residues 90–110 (AVDNVFVWLMLFSYFSVPAAL). The Cytoplasmic portion of the chain corresponds to 111 to 113 (QRR). A helical membrane pass occupies residues 114–134 (VLVYGVLGAIVLRTIMIFTGS). Trp-135 is a topological domain (periplasmic). A helical transmembrane segment spans residues 136 to 156 (LISQFDWILYIFGAFLLFTGV). The Cytoplasmic portion of the chain corresponds to 157-198 (KMALAHEDESGIGDKPLVRWLRGHLRMTDTIDNEHFFVRKNG). Residues 199–219 (LLYATPLMLVLILVELSDVIF) form a helical membrane-spanning segment. Residues 220 to 225 (AVDSIP) are Periplasmic-facing. Residues 226 to 246 (AIFAVTTDPFIVLTSNLFAIL) traverse the membrane as a helical segment. Residues 247-261 (GLRAMYFLLAGVAER) are Cytoplasmic-facing. A helical membrane pass occupies residues 262–282 (FSMLKYGLAVILVFIGIKMLI). Over 283–286 (VDFY) the chain is Periplasmic. The chain crosses the membrane as a helical span at residues 287–307 (HIPIAVSLGVVFGILVMTFII). Residues 308 to 321 (NAWVNYRHDKQRGG) lie on the Cytoplasmic side of the membrane.

It belongs to the TerC family.

The protein localises to the cell inner membrane. In terms of biological role, has been proposed to be a redox modulator. The protein is Putative membrane-bound redox modulator Alx of Escherichia coli (strain K12).